A 253-amino-acid polypeptide reads, in one-letter code: Indole-3-glycerol phosphate synthase (253 aa).

It belongs to the TrpC family.

It carries out the reaction 1-(2-carboxyphenylamino)-1-deoxy-D-ribulose 5-phosphate + H(+) = (1S,2R)-1-C-(indol-3-yl)glycerol 3-phosphate + CO2 + H2O. Its pathway is amino-acid biosynthesis; L-tryptophan biosynthesis; L-tryptophan from chorismate: step 4/5. In Bacillus cereus (strain AH187), this protein is Indole-3-glycerol phosphate synthase.